The primary structure comprises 173 residues: Putative metal-dependent hydrolase BCG9842_B2589 (173 aa).

His-65, His-156, and His-160 together coordinate Zn(2+).

The protein belongs to the metal hydrolase YfiT family. Homodimer. Zn(2+) is required as a cofactor.

It localises to the cytoplasm. Possible metal-dependent hydrolase. The polypeptide is Putative metal-dependent hydrolase BCG9842_B2589 (Bacillus cereus (strain G9842)).